The primary structure comprises 366 residues: Cobalt-precorrin-5B C(1)-methyltransferase (366 aa).

This sequence belongs to the CbiD family.

The enzyme catalyses Co-precorrin-5B + S-adenosyl-L-methionine = Co-precorrin-6A + S-adenosyl-L-homocysteine. The protein operates within cofactor biosynthesis; adenosylcobalamin biosynthesis; cob(II)yrinate a,c-diamide from sirohydrochlorin (anaerobic route): step 6/10. In terms of biological role, catalyzes the methylation of C-1 in cobalt-precorrin-5B to form cobalt-precorrin-6A. The sequence is that of Cobalt-precorrin-5B C(1)-methyltransferase from Hahella chejuensis (strain KCTC 2396).